We begin with the raw amino-acid sequence, 528 residues long: Probable protein phosphatase 2C 51 (528 aa).

Residues 8–28 form a helical membrane-spanning segment; that stretch reads SLLNLGLLIIFFVFFFLVINC. The 375-residue stretch at 71–445 folds into the PPM-type phosphatase domain; the sequence is RCHTAAIQGR…DNMAAVVVPL (375 aa). Mn(2+) is bound by residues Asp-117, Gly-118, Asp-385, and Asp-436.

This sequence belongs to the PP2C family. It depends on Mg(2+) as a cofactor. The cofactor is Mn(2+).

It is found in the membrane. The enzyme catalyses O-phospho-L-seryl-[protein] + H2O = L-seryl-[protein] + phosphate. It catalyses the reaction O-phospho-L-threonyl-[protein] + H2O = L-threonyl-[protein] + phosphate. The chain is Probable protein phosphatase 2C 51 from Arabidopsis thaliana (Mouse-ear cress).